A 151-amino-acid chain; its full sequence is Phosphopantetheine adenylyltransferase (151 aa).

Residue Ser-9 coordinates substrate. Residues 9-10 and His-17 contribute to the ATP site; that span reads SF. Residues Lys-41, Thr-73, and Arg-87 each contribute to the substrate site. ATP contacts are provided by residues 88–90, Glu-98, and 122–128; these read GLR and KAHISST.

This sequence belongs to the bacterial CoaD family. Homohexamer. Mg(2+) is required as a cofactor.

It localises to the cytoplasm. It carries out the reaction (R)-4'-phosphopantetheine + ATP + H(+) = 3'-dephospho-CoA + diphosphate. The protein operates within cofactor biosynthesis; coenzyme A biosynthesis; CoA from (R)-pantothenate: step 4/5. Functionally, reversibly transfers an adenylyl group from ATP to 4'-phosphopantetheine, yielding dephospho-CoA (dPCoA) and pyrophosphate. The chain is Phosphopantetheine adenylyltransferase from Christiangramia forsetii (strain DSM 17595 / CGMCC 1.15422 / KT0803) (Gramella forsetii).